The sequence spans 382 residues: 1-deoxy-D-xylulose 5-phosphate reductoisomerase (382 aa).

Threonine 10, glycine 11, serine 12, isoleucine 13, asparagine 38, and asparagine 120 together coordinate NADPH. Lysine 121 is a 1-deoxy-D-xylulose 5-phosphate binding site. Glutamate 122 serves as a coordination point for NADPH. Residue aspartate 146 participates in Mn(2+) binding. 1-deoxy-D-xylulose 5-phosphate contacts are provided by serine 147, glutamate 148, serine 172, and histidine 195. Glutamate 148 serves as a coordination point for Mn(2+). Residue glycine 201 coordinates NADPH. Residues serine 208, asparagine 213, lysine 214, and glutamate 217 each contribute to the 1-deoxy-D-xylulose 5-phosphate site. Glutamate 217 serves as a coordination point for Mn(2+).

This sequence belongs to the DXR family. Mg(2+) serves as cofactor. Requires Mn(2+) as cofactor.

It carries out the reaction 2-C-methyl-D-erythritol 4-phosphate + NADP(+) = 1-deoxy-D-xylulose 5-phosphate + NADPH + H(+). It participates in isoprenoid biosynthesis; isopentenyl diphosphate biosynthesis via DXP pathway; isopentenyl diphosphate from 1-deoxy-D-xylulose 5-phosphate: step 1/6. Its function is as follows. Catalyzes the NADPH-dependent rearrangement and reduction of 1-deoxy-D-xylulose-5-phosphate (DXP) to 2-C-methyl-D-erythritol 4-phosphate (MEP). The polypeptide is 1-deoxy-D-xylulose 5-phosphate reductoisomerase (Thermoanaerobacter pseudethanolicus (strain ATCC 33223 / 39E) (Clostridium thermohydrosulfuricum)).